Consider the following 174-residue polypeptide: Bifunctional protein PyrR 2 (174 aa).

Residues 39–40 (TR), 100–108 (DDVLFTGRT), and Arg-133 contribute to the substrate site. The PRPP-binding motif lies at 96–108 (VILVDDVLFTGRT).

Belongs to the purine/pyrimidine phosphoribosyltransferase family. PyrR subfamily. Homodimer and homohexamer; in equilibrium.

It carries out the reaction UMP + diphosphate = 5-phospho-alpha-D-ribose 1-diphosphate + uracil. Regulates transcriptional attenuation of the pyrimidine nucleotide (pyr) operon by binding in a uridine-dependent manner to specific sites on pyr mRNA. This disrupts an antiterminator hairpin in the RNA and favors formation of a downstream transcription terminator, leading to a reduced expression of downstream genes. Its function is as follows. Also displays a weak uracil phosphoribosyltransferase activity which is not physiologically significant. The protein is Bifunctional protein PyrR 2 (pyrR2) of Lactiplantibacillus plantarum (strain ATCC BAA-793 / NCIMB 8826 / WCFS1) (Lactobacillus plantarum).